A 1048-amino-acid polypeptide reads, in one-letter code: MREVEEVSKWRRRCCYFWILFPLAVIATCMTITVVTFCSSTMYMTEVMGEATKGAMDSALMHIAGNMRPLLEANRSVFTIANTLHVQGNMASFSHVGPKLFLAFSMQPLQAQISYAAVDGAAFAYYRAGGGDGEARAMFARPNGTWFTQAVDPATGRPVGNATAAAPHQQLPPNVTRLLLDGGGGGASLADGWARPGVRMLFLSAPVGGGGGAVSAAVAVDDVVLRGAAGLRQLRDLGMYYAVAGNGGATAAPPAPEPAAYRSLLGDGAAAEEMALFSSVKCTASAIDAPPKLDVHGVKSDKYRFACTNFDISGVQMGFRVVLRKSAMVGVFRRGGVTMVAVACAAAAAATVACVLMARALRRAVAREAALGADLARHRDALRQAERKSMNKSNAFASASHDIRSALAAVAGLVEVSRPEANPNIVDNLNQMELCTNKLLDILNSILDTTKVESGKVQLEEVEFNMADVLEESVDMANVVGITKGIEVIWDPCDFSVMKCDNIIGDSKRFKQILDNLLGNAMKFTQEGHVILRAWANRPIARGSIGAPSRFAYRSLENNFFSFFFGAKEDRVSQNSFNPLQNDPNSVEFYFEVVDTGIGIPKEKRESVFENYVQVKEGHGGTGLGLGIVQSFVRLMGGEISIKEKEPGERGTCFGFNVLLKTSGNQAAEEDIEEGPSTVSELDIRASVFRETNCFKGWHCILFVHGDETRRVLQAWMESIGMKVWMVPGVESISSTLEKARSSRDDCDVDRCFSSKEMVSQVLPTTLRNNNIMARNLGEHHPLGMLLIVDVSNGQLENIQRQARDFTQMRSQVPCKFVCLTDLRTSYKDFRRFEEMSCDLILRKPVHGSRLYSLLMTLRDVQSSPMHRSSLVGHENYVTRHQDSANIVALAEVGRLDQGLKTEEDRPLDGMHVLLVEDTLVLQTIQRKMLNQLGAIVELAGDGAKAVDMFRDAIERASVSEEHSVPLPYDVIFMDCQMPRMDGYEATRRIREEESRYGIRTPIIALTAHSMEDDLQKAIDVGMDLHMTKPIERRRIVEAVHGVCKGKN.

Residues 1–16 are Cytoplasmic-facing; that stretch reads MREVEEVSKWRRRCCY. Residues 17-37 form a helical membrane-spanning segment; the sequence is FWILFPLAVIATCMTITVVTF. The Extracellular portion of the chain corresponds to 38–336; the sequence is CSSTMYMTEV…AMVGVFRRGG (299 aa). Residues 337-357 traverse the membrane as a helical segment; it reads VTMVAVACAAAAAATVACVLM. Residues 358-1048 lie on the Cytoplasmic side of the membrane; sequence ARALRRAVAR…AVHGVCKGKN (691 aa). The Histidine kinase domain maps to 398–662; sequence SASHDIRSAL…CFGFNVLLKT (265 aa). A Phosphohistidine; by autocatalysis modification is found at H401. The Response regulatory domain maps to 912–1044; it reads HVLLVEDTLV…RIVEAVHGVC (133 aa). D975 is subject to 4-aspartylphosphate.

Post-translationally, activation probably requires a transfer of a phosphate group between a His in the transmitter domain and an Asp of the receiver domain.

It is found in the cell membrane. It carries out the reaction ATP + protein L-histidine = ADP + protein N-phospho-L-histidine.. In terms of biological role, cytokinin receptor related to bacterial two-component regulators. Functions as a histidine kinase and transmits the stress signal to a downstream MAPK cascade. This chain is Probable histidine kinase 2, found in Oryza sativa subsp. indica (Rice).